Here is a 407-residue protein sequence, read N- to C-terminus: MLVGKISGYEDNTRSLERETSEITSLLSQFPGNTNVLVVDTNFTTLLNMKQIMKQYAYQVSIETDAEKALAFLTSCKHEINIVIWDFHMPGIDGLQALKSITSKLDLPVVIMSDDNQTESVMKATFYGACDYVVKPVKEEVMANIWQHIVRKRLIFKPDVAPPKPRMTWSEVFQPVQSHLVPTDGLDRDHFDSITINGGNGIQNMEKKQGKKPRKPRMTWTEELHQKFLEAIEIIGGIEKANPKVLVECLQEMRIEGITRSNVASHLQKHRINLEENQIPQQTQGNGWATAYGTLAPSLQGSDNVNTTIPSYLMNGPATLNQIQQNQYQNGFLTMNNNQIITNPPPPLPYLDHHHQQQHQSSPQFNYLMNNEELLQASGLSATDLELTYPSLPYDPQEYLINGYNYN.

Positions 35 to 150 constitute a Response regulatory domain; it reads NVLVVDTNFT…VMANIWQHIV (116 aa). Aspartate 86 carries the 4-aspartylphosphate modification. The Nuclear localization signal motif lies at 214–217; the sequence is RKPR. The myb-like GARP DNA-binding region spans 217–271; sequence RMTWTEELHQKFLEAIEIIGGIEKANPKVLVECLQEMRIEGITRSNVASHLQKHR.

This sequence belongs to the ARR family. Type-B subfamily. As to quaternary structure, binds the target DNA as a monomer. In terms of processing, two-component system major event consists of a His-to-Asp phosphorelay between a sensor histidine kinase (HK) and a response regulator (RR). In plants, the His-to-Asp phosphorelay involves an additional intermediate named Histidine-containing phosphotransfer protein (HPt). This multistep phosphorelay consists of a His-Asp-His-Asp sequential transfer of a phosphate group between first a His and an Asp of the HK protein, followed by the transfer to a conserved His of the HPt protein and finally the transfer to an Asp in the receiver domain of the RR protein. In terms of tissue distribution, detected in trichomes and siliques.

It is found in the nucleus. Its function is as follows. Putative transcriptional activator that binds specifically to the DNA sequence 5'-[AG]GATT-3'. Functions as a response regulator involved in His-to-Asp phosphorelay signal transduction system. Phosphorylation of the Asp residue in the receiver domain activates the ability of the protein to promote the transcription of target genes. Could directly activate some type-A response regulators in response to cytokinins. The protein is Putative two-component response regulator ARR19 (ARR19) of Arabidopsis thaliana (Mouse-ear cress).